The primary structure comprises 130 residues: Small ribosomal subunit protein uS11 (130 aa).

This sequence belongs to the universal ribosomal protein uS11 family. As to quaternary structure, part of the 30S ribosomal subunit. Interacts with proteins S7 and S18. Binds to IF-3.

Located on the platform of the 30S subunit, it bridges several disparate RNA helices of the 16S rRNA. Forms part of the Shine-Dalgarno cleft in the 70S ribosome. In Shewanella baltica (strain OS223), this protein is Small ribosomal subunit protein uS11.